Reading from the N-terminus, the 301-residue chain is Probable alpha-L-glutamate ligase (301 aa).

In terms of domain architecture, ATP-grasp spans 104–287; the sequence is LQLLSRRGIG…VAGIIIEHLE (184 aa). Residues Lys141, 178-179, Asp187, and 211-213 contribute to the ATP site; these read EY and RSN. Residues Asp248, Glu260, and Asn262 each contribute to the Mg(2+) site. The Mn(2+) site is built by Asp248, Glu260, and Asn262.

This sequence belongs to the RimK family. It depends on Mg(2+) as a cofactor. Mn(2+) is required as a cofactor.

The polypeptide is Probable alpha-L-glutamate ligase (Pseudomonas fluorescens (strain SBW25)).